Consider the following 29-residue polypeptide: Trypsin inhibitor 5 (29 aa).

3 cysteine pairs are disulfide-bonded: cysteine 3–cysteine 20, cysteine 10–cysteine 22, and cysteine 16–cysteine 28.

This sequence belongs to the protease inhibitor I7 (squash-type serine protease inhibitor) family.

It localises to the secreted. Functionally, strongly inhibits trypsin, weakly inhibits chymotrypsin. The sequence is that of Trypsin inhibitor 5 from Cyclanthera pedata (Achocha).